A 285-amino-acid chain; its full sequence is Bifunctional protein FolD (285 aa).

NADP(+) is bound by residues Gly-166 to Ser-168 and Ile-232.

It belongs to the tetrahydrofolate dehydrogenase/cyclohydrolase family. As to quaternary structure, homodimer.

The enzyme catalyses (6R)-5,10-methylene-5,6,7,8-tetrahydrofolate + NADP(+) = (6R)-5,10-methenyltetrahydrofolate + NADPH. It carries out the reaction (6R)-5,10-methenyltetrahydrofolate + H2O = (6R)-10-formyltetrahydrofolate + H(+). It participates in one-carbon metabolism; tetrahydrofolate interconversion. Catalyzes the oxidation of 5,10-methylenetetrahydrofolate to 5,10-methenyltetrahydrofolate and then the hydrolysis of 5,10-methenyltetrahydrofolate to 10-formyltetrahydrofolate. The protein is Bifunctional protein FolD of Aliivibrio fischeri (strain MJ11) (Vibrio fischeri).